We begin with the raw amino-acid sequence, 642 residues long: Threonine--tRNA ligase (642 aa).

The 61-residue stretch at 1-61 (MPVITLPDGS…DTDAQLAIIT (61 aa)) folds into the TGS domain. The segment at 243-534 (DHRKIGKQLD…LTEEFAGFFP (292 aa)) is catalytic. Residues cysteine 334, histidine 385, and histidine 511 each contribute to the Zn(2+) site.

The protein belongs to the class-II aminoacyl-tRNA synthetase family. Homodimer. The cofactor is Zn(2+).

The protein localises to the cytoplasm. It carries out the reaction tRNA(Thr) + L-threonine + ATP = L-threonyl-tRNA(Thr) + AMP + diphosphate + H(+). In terms of biological role, catalyzes the attachment of threonine to tRNA(Thr) in a two-step reaction: L-threonine is first activated by ATP to form Thr-AMP and then transferred to the acceptor end of tRNA(Thr). Also edits incorrectly charged L-seryl-tRNA(Thr). The polypeptide is Threonine--tRNA ligase (Pectobacterium atrosepticum (strain SCRI 1043 / ATCC BAA-672) (Erwinia carotovora subsp. atroseptica)).